The sequence spans 434 residues: Beta-enolase (434 aa).

The residue at position 2 (Ala-2) is an N-acetylalanine. Position 72 is a phosphothreonine (Thr-72). A phosphoserine mark is found at Ser-83 and Ser-157. His-158 and Glu-167 together coordinate substrate. At Ser-176 the chain carries Phosphoserine. Phosphothreonine is present on Thr-205. The active-site Proton donor is the Glu-210. Phosphothreonine is present on Thr-229. A Phosphotyrosine modification is found at Tyr-236. Residue Asp-245 coordinates Mg(2+). Ser-263 carries the phosphoserine modification. The substrate site is built by Glu-293 and Asp-318. Mg(2+) contacts are provided by Glu-293 and Asp-318. Residue Lys-343 is the Proton acceptor of the active site. Residues 370–373 (SHRS) and Lys-394 each bind substrate.

Belongs to the enolase family. As to quaternary structure, mammalian enolase is composed of 3 isozyme subunits, alpha, beta and gamma, which can form homodimers or heterodimers which are cell-type and development-specific. Interacts with PNKD. Mg(2+) is required as a cofactor.

Its subcellular location is the cytoplasm. It catalyses the reaction (2R)-2-phosphoglycerate = phosphoenolpyruvate + H2O. The protein operates within carbohydrate degradation; glycolysis; pyruvate from D-glyceraldehyde 3-phosphate: step 4/5. Functionally, glycolytic enzyme that catalyzes the conversion of 2-phosphoglycerate to phosphoenolpyruvate. Appears to have a function in striated muscle development and regeneration. In Bos taurus (Bovine), this protein is Beta-enolase (ENO3).